Here is a 273-residue protein sequence, read N- to C-terminus: Putative phosphoenolpyruvate synthase regulatory protein (273 aa).

ADP is bound at residue 153–160; sequence GVSRSGKT.

This sequence belongs to the pyruvate, phosphate/water dikinase regulatory protein family. PSRP subfamily.

The catalysed reaction is [pyruvate, water dikinase] + ADP = [pyruvate, water dikinase]-phosphate + AMP + H(+). The enzyme catalyses [pyruvate, water dikinase]-phosphate + phosphate + H(+) = [pyruvate, water dikinase] + diphosphate. Functionally, bifunctional serine/threonine kinase and phosphorylase involved in the regulation of the phosphoenolpyruvate synthase (PEPS) by catalyzing its phosphorylation/dephosphorylation. The protein is Putative phosphoenolpyruvate synthase regulatory protein of Paracidovorax citrulli (strain AAC00-1) (Acidovorax citrulli).